The sequence spans 525 residues: uncharacterized protein (525 aa).

2 stretches are compositionally biased toward polar residues: residues 139–149 and 336–349; these read LNSTPDKTQAG and SGKT…HTTS. Disordered stretches follow at residues 139 to 158 and 330 to 356; these read LNST…HQAP and PAPA…PYAT.

This is an uncharacterized protein from Treponema pallidum (strain Nichols).